We begin with the raw amino-acid sequence, 227 residues long: tRNA (guanine-N(7)-)-methyltransferase (227 aa).

Positions 57, 82, 109, and 132 each coordinate S-adenosyl-L-methionine. The active site involves Asp132. Substrate contacts are provided by residues Lys136, Asp168, and 205-208 (TKFE).

It belongs to the class I-like SAM-binding methyltransferase superfamily. TrmB family.

It catalyses the reaction guanosine(46) in tRNA + S-adenosyl-L-methionine = N(7)-methylguanosine(46) in tRNA + S-adenosyl-L-homocysteine. It participates in tRNA modification; N(7)-methylguanine-tRNA biosynthesis. Catalyzes the formation of N(7)-methylguanine at position 46 (m7G46) in tRNA. The chain is tRNA (guanine-N(7)-)-methyltransferase from Leifsonia xyli subsp. xyli (strain CTCB07).